The chain runs to 258 residues: MVLIRVLANLLILQLSYAQKSSELVIGGDECNINEHRFLALVFNSSGFLCSGTLINQEWVLTAAHCDMENMRIYLGVHNESVQYDDEQTRVPEEKFFCLRSNNDTKWDKDIMLIRLDSPVNNSAHIAPLNLPFNPPMLGSVCRIMGWGAITSPNEIYSSVPHCANINVLHYSMCRAVYPGMPAQTRILCAGIQTGGIDTCSGDSGGPLICNGQFQGIVSWGRYPCAKPRAPGLYTRVFDYTDWIENIIAGNTDASCPP.

The first 18 residues, 1-18 (MVLIRVLANLLILQLSYA), serve as a signal peptide directing secretion. Residues 19 to 24 (QKSSEL) constitute a propeptide that is removed on maturation. The 225-residue stretch at 25–249 (VIGGDECNIN…YTDWIENIIA (225 aa)) folds into the Peptidase S1 domain. Disulfide bonds link Cys-31/Cys-163, Cys-50/Cys-66, Cys-98/Cys-256, Cys-142/Cys-210, Cys-174/Cys-189, and Cys-200/Cys-225. Asn-44 carries an N-linked (GlcNAc...) asparagine glycan. Catalysis depends on His-65, which acts as the Charge relay system. 2 N-linked (GlcNAc...) asparagine glycosylation sites follow: Asn-79 and Asn-103. The Charge relay system role is filled by Asp-110. Asn-121 carries N-linked (GlcNAc...) asparagine glycosylation. Ser-204 functions as the Charge relay system in the catalytic mechanism.

The protein belongs to the peptidase S1 family. Snake venom subfamily. In terms of assembly, monomer. Post-translationally, N-glycosylated. As to expression, expressed by the venom gland.

It localises to the secreted. In terms of biological role, thrombin-like snake venom serine protease that cleaves fibrinogen beta (FGB) releasing fibrinopeptide B. Promotes capillary permeability-increasing activity through the release of peptides from the beta-chain of fibrinogen. This Gloydius ussuriensis (Ussuri mamushi) protein is Thrombin-like enzyme CPI-enzyme 2.